Here is a 249-residue protein sequence, read N- to C-terminus: Transmembrane protein 150C (249 aa).

Residues 1 to 9 (MDGKKCSVW) lie on the Cytoplasmic side of the membrane. A helical membrane pass occupies residues 10–30 (MFLPLVFTLFTSAGLWIVYFI). The Extracellular portion of the chain corresponds to 31-64 (AVEDDKILPLNSAERKPGVKHAPYISIAGDDPPA). A helical membrane pass occupies residues 65–85 (SCVFSQVMNMAAFLALVVAVL). Residues 86 to 97 (RFIQLKPKVLNP) lie on the Cytoplasmic side of the membrane. The chain crosses the membrane as a helical span at residues 98–118 (WLNISGLVALCLASFGMTLLG). Residues 119 to 130 (NFQLTNDEEIHN) are Extracellular-facing. Residues 131–151 (VGTSLTFGFGTLTCWIQAALT) traverse the membrane as a helical segment. At 152 to 168 (LKVNIKNEGRRVGIPRV) the chain is on the cytoplasmic side. The helical transmembrane segment at 169-189 (ILSASITLCVVLYFILMAQSI) threads the bilayer. Over 190–192 (HMY) the chain is Extracellular. Residues 193-213 (AARVQWGLVMCFLSYFGTFAV) form a helical membrane-spanning segment. Over 214 to 249 (EFRHYRYEIVCSEYQENFLSFSESLSEASEYQTDQV) the chain is Cytoplasmic.

The protein belongs to the DRAM/TMEM150 family.

The protein localises to the cell membrane. The protein resides in the lysosome membrane. It catalyses the reaction Ca(2+)(in) = Ca(2+)(out). The catalysed reaction is Na(+)(in) = Na(+)(out). The enzyme catalyses K(+)(in) = K(+)(out). It carries out the reaction Mg(2+)(in) = Mg(2+)(out). In terms of biological role, nonselective cationic channel with high permeability to Ca(2+). Component of a mechanosensitive cation channel, confers mechanically activated (MA) currents with slow inactivation kinetics. May contribute to proprioception. The protein is Transmembrane protein 150C of Homo sapiens (Human).